The following is a 233-amino-acid chain: Putative 26S proteasome non-ATPase regulatory subunit 8 homolog B (233 aa).

Met1 carries the post-translational modification N-acetylmethionine. The 180-residue stretch at 38-217 (DHYLISLSLN…APCKEIPSLQ (180 aa)) folds into the PCI domain.

It belongs to the proteasome subunit S14 family. In terms of assembly, component of the 19S regulatory particle (RP/PA700) lid subcomplex of the 26S proteasome. The 26S proteasome is composed of a core protease (CP), known as the 20S proteasome, capped at one or both ends by the 19S regulatory particle (RP/PA700). The RP/PA700 complex is composed of at least 17 different subunits in two subcomplexes, the base and the lid, which form the portions proximal and distal to the 20S proteolytic core, respectively. Interacts with UCH1 and UCH2.

In terms of biological role, acts as a regulatory subunit of the 26S proteasome which is involved in the ATP-dependent degradation of ubiquitinated proteins. The polypeptide is Putative 26S proteasome non-ATPase regulatory subunit 8 homolog B (Arabidopsis thaliana (Mouse-ear cress)).